The primary structure comprises 211 residues: Arginine exporter protein ArgO (211 aa).

Transmembrane regions (helical) follow at residues 1-21 (MISY…PLGP), 37-57 (LMIA…GIFG), 68-88 (LLAL…FGAL), 111-131 (IIAT…DTFV), 147-167 (WFAL…ALLA), and 179-199 (AQRI…FQLA).

It belongs to the LysE/ArgO transporter (TC 2.A.75) family.

It is found in the cell inner membrane. The catalysed reaction is L-arginine(in) = L-arginine(out). Its function is as follows. Involved in the export of arginine. Important to control the intracellular level of arginine and the correct balance between arginine and lysine. The sequence is that of Arginine exporter protein ArgO from Salmonella typhimurium (strain LT2 / SGSC1412 / ATCC 700720).